Here is a 72-residue protein sequence, read N- to C-terminus: NAD(P)H-quinone oxidoreductase subunit O (72 aa).

This sequence belongs to the complex I NdhO subunit family. In terms of assembly, NDH-1 can be composed of about 15 different subunits; different subcomplexes with different compositions have been identified which probably have different functions.

The protein localises to the cellular thylakoid membrane. It catalyses the reaction a plastoquinone + NADH + (n+1) H(+)(in) = a plastoquinol + NAD(+) + n H(+)(out). The catalysed reaction is a plastoquinone + NADPH + (n+1) H(+)(in) = a plastoquinol + NADP(+) + n H(+)(out). In terms of biological role, NDH-1 shuttles electrons from an unknown electron donor, via FMN and iron-sulfur (Fe-S) centers, to quinones in the respiratory and/or the photosynthetic chain. The immediate electron acceptor for the enzyme in this species is believed to be plastoquinone. Couples the redox reaction to proton translocation, and thus conserves the redox energy in a proton gradient. Cyanobacterial NDH-1 also plays a role in inorganic carbon-concentration. This chain is NAD(P)H-quinone oxidoreductase subunit O, found in Synechococcus elongatus (strain ATCC 33912 / PCC 7942 / FACHB-805) (Anacystis nidulans R2).